The chain runs to 104 residues: Flagellar hook-basal body complex protein FliE (104 aa).

This sequence belongs to the FliE family.

The protein resides in the bacterial flagellum basal body. The protein is Flagellar hook-basal body complex protein FliE of Escherichia fergusonii (strain ATCC 35469 / DSM 13698 / CCUG 18766 / IAM 14443 / JCM 21226 / LMG 7866 / NBRC 102419 / NCTC 12128 / CDC 0568-73).